Here is a 416-residue protein sequence, read N- to C-terminus: Tyrosine--tRNA ligase (416 aa).

Tyr-40 contributes to the L-tyrosine binding site. The 'HIGH' region signature appears at 45–54; the sequence is ATAASLHVGH. Tyr-177 and Gln-181 together coordinate L-tyrosine. The short motif at 237 to 241 is the 'KMSKS' region element; it reads KMGKS. An ATP-binding site is contributed by Lys-240. Residues 351 to 416 enclose the S4 RNA-binding domain; sequence LSVTHFLVAA…RKKHKLVRLA (66 aa).

Belongs to the class-I aminoacyl-tRNA synthetase family. TyrS type 1 subfamily. Homodimer.

It localises to the cytoplasm. It catalyses the reaction tRNA(Tyr) + L-tyrosine + ATP = L-tyrosyl-tRNA(Tyr) + AMP + diphosphate + H(+). Its function is as follows. Catalyzes the attachment of tyrosine to tRNA(Tyr) in a two-step reaction: tyrosine is first activated by ATP to form Tyr-AMP and then transferred to the acceptor end of tRNA(Tyr). This Cereibacter sphaeroides (strain ATCC 17025 / ATH 2.4.3) (Rhodobacter sphaeroides) protein is Tyrosine--tRNA ligase.